The following is a 144-amino-acid chain: Maximins 5/H4 type 3 (144 aa).

An N-terminal signal peptide occupies residues methionine 1–alanine 18. 2 propeptides span residues arginine 19–arginine 43 and threonine 74–arginine 123. Leucine 143 is subject to Leucine amide.

Belongs to the bombinin family. As to expression, expressed by the skin glands.

It is found in the secreted. Its function is as follows. Maximin-5 shows antibacterial activity against both Gram-positive and Gram-negative bacteria. The only exception is the resistance of E.coli. Also shows antimicrobial activity against fungi C.albicans, A.flavus and P.uticale. It has little hemolytic activity. It does not possess a significant cytotoxicity against tumor cell lines. It does not possess a significant anti-HIV activity. In terms of biological role, maximin-H4 shows antibacterial activity against both Gram-positive and Gram-negative bacteria. It also shows antimicrobial activity against the fungus C.albicans. Shows strong hemolytic activity. The sequence is that of Maximins 5/H4 type 3 from Bombina maxima (Giant fire-bellied toad).